Here is a 315-residue protein sequence, read N- to C-terminus: Transaldolase (315 aa).

The active-site Schiff-base intermediate with substrate is the K131.

It belongs to the transaldolase family. Type 1 subfamily. In terms of assembly, homodimer.

Its subcellular location is the cytoplasm. It catalyses the reaction D-sedoheptulose 7-phosphate + D-glyceraldehyde 3-phosphate = D-erythrose 4-phosphate + beta-D-fructose 6-phosphate. The protein operates within carbohydrate degradation; pentose phosphate pathway; D-glyceraldehyde 3-phosphate and beta-D-fructose 6-phosphate from D-ribose 5-phosphate and D-xylulose 5-phosphate (non-oxidative stage): step 2/3. Its function is as follows. Transaldolase is important for the balance of metabolites in the pentose-phosphate pathway. The polypeptide is Transaldolase (Actinobacillus pleuropneumoniae serotype 5b (strain L20)).